A 271-amino-acid polypeptide reads, in one-letter code: RELT-like protein 1 (271 aa).

Residues M1–S23 form the signal peptide. Residues S24–E57 lie on the Extracellular side of the membrane. Residues A28–N53 are disordered. Residues N31 and N49 are each glycosylated (N-linked (GlcNAc...) asparagine). A compositionally biased stretch (polar residues) spans N31–G52. The chain crosses the membrane as a helical span at residues Y58 to C78. At H79–E271 the chain is on the cytoplasmic side. Residues T89–N113 adopt a coiled-coil conformation. Phosphoserine occurs at positions 109 and 114. Disordered regions lie at residues D145–K173 and V233–E271. Positions P155–L165 are enriched in pro residues. Over residues V233 to S244 the composition is skewed to basic and acidic residues. S244 and S247 each carry phosphoserine.

Belongs to the RELT family. Interacts with RELT, RELL2 and OXSR1. Interacts with PLSCR1. Post-translationally, phosphorylated in vitro by OXSR1. Widely expressed. Expressed at highest levels in the placenta, skeletal muscle, spleen and testis.

Its subcellular location is the cell membrane. Its function is as follows. Induces activation of MAPK14/p38 cascade, when overexpressed. Induces apoptosis, when overexpressed. This Homo sapiens (Human) protein is RELT-like protein 1 (RELL1).